Reading from the N-terminus, the 932-residue chain is Protocadherin gamma-A9 (932 aa).

The N-terminal stretch at 1 to 28 (MAAPTKCQLRGRLVLLCSLLGMLWEARA) is a signal peptide. 6 Cadherin domains span residues 29–133 (SQIR…APKF), 134–242 (QAES…APVF), 243–347 (AQRI…RPEV), 348–452 (TITS…PPAF), 453–562 (SQAS…APEI), and 570–683 (DGST…IPAD). The Extracellular segment spans residues 29-692 (SQIRYSVPEE…DLEASDLTLY (664 aa)). Asn-47 and Asn-127 each carry an N-linked (GlcNAc...) asparagine glycan. Residues Asn-389, Asn-419, and Asn-545 are each glycosylated (N-linked (GlcNAc...) asparagine). The helical transmembrane segment at 693–713 (LVVAVAVVSCVFLTFVITLLA) threads the bilayer. Residues 714–932 (LRLRHWHSSH…KKKSGKKEKK (219 aa)) lie on the Cytoplasmic side of the membrane. 2 disordered regions span residues 803-841 (DTPL…WPNN) and 902-932 (ATLT…KEKK). A compositionally biased stretch (polar residues) spans 816–841 (WRFSQAQRPGTSGSQNGDDTGTWPNN). Basic residues predominate over residues 922-932 (NKKKSGKKEKK).

It is found in the cell membrane. Functionally, potential calcium-dependent cell-adhesion protein. May be involved in the establishment and maintenance of specific neuronal connections in the brain. This is Protocadherin gamma-A9 (PCDHGA9) from Pan troglodytes (Chimpanzee).